The chain runs to 471 residues: Eukaryotic translation initiation factor 3 subunit L (471 aa).

One can recognise a PCI domain in the interval aspartate 252 to leucine 446.

It belongs to the eIF-3 subunit L family.

The protein localises to the cytoplasm. Functionally, component of the eukaryotic translation initiation factor 3 (eIF-3) complex, which is involved in protein synthesis of a specialized repertoire of mRNAs and, together with other initiation factors, stimulates binding of mRNA and methionyl-tRNAi to the 40S ribosome. The eIF-3 complex specifically targets and initiates translation of a subset of mRNAs involved in cell proliferation. The chain is Eukaryotic translation initiation factor 3 subunit L from Pyricularia oryzae (strain Y34) (Rice blast fungus).